The sequence spans 170 residues: MLQPHLVIGSAFTFGDAFFTLFAFAILLVLIRIYAWKPLMGVMKEREEHIGSEIDAAEESRAQAEQLLAEQKSVLQQARVESQTMIENAKQLGEKEREEIVKTARRESERIKEEAKADIAREKEDAISALREQVGSLSVLIASKVIEKNLDEKEQSNLIQDYIERLGDDK.

The chain crosses the membrane as a helical span at residues 11–31 (AFTFGDAFFTLFAFAILLVLI).

This sequence belongs to the ATPase B chain family. In terms of assembly, F-type ATPases have 2 components, F(1) - the catalytic core - and F(0) - the membrane proton channel. F(1) has five subunits: alpha(3), beta(3), gamma(1), delta(1), epsilon(1). F(0) has three main subunits: a(1), b(2) and c(10-14). The alpha and beta chains form an alternating ring which encloses part of the gamma chain. F(1) is attached to F(0) by a central stalk formed by the gamma and epsilon chains, while a peripheral stalk is formed by the delta and b chains.

The protein localises to the cell membrane. Its function is as follows. F(1)F(0) ATP synthase produces ATP from ADP in the presence of a proton or sodium gradient. F-type ATPases consist of two structural domains, F(1) containing the extramembraneous catalytic core and F(0) containing the membrane proton channel, linked together by a central stalk and a peripheral stalk. During catalysis, ATP synthesis in the catalytic domain of F(1) is coupled via a rotary mechanism of the central stalk subunits to proton translocation. Functionally, component of the F(0) channel, it forms part of the peripheral stalk, linking F(1) to F(0). The polypeptide is ATP synthase subunit b (Listeria innocua serovar 6a (strain ATCC BAA-680 / CLIP 11262)).